The following is a 138-amino-acid chain: Peptide methionine sulfoxide reductase MsrB (138 aa).

A MsrB domain is found at 15–137 (EAEWRAQLDP…NSASLGFEPR (123 aa)). Zn(2+) is bound by residues cysteine 54, cysteine 57, cysteine 103, and cysteine 106. Cysteine 126 functions as the Nucleophile in the catalytic mechanism.

It belongs to the MsrB Met sulfoxide reductase family. Requires Zn(2+) as cofactor.

It catalyses the reaction L-methionyl-[protein] + [thioredoxin]-disulfide + H2O = L-methionyl-(R)-S-oxide-[protein] + [thioredoxin]-dithiol. This chain is Peptide methionine sulfoxide reductase MsrB, found in Methylibium petroleiphilum (strain ATCC BAA-1232 / LMG 22953 / PM1).